The primary structure comprises 826 residues: Outer membrane usher protein YehB (826 aa).

A signal peptide spans 1–22; sequence MLRMTPLASAIVALLLGIEAYA. C809 and C825 form a disulfide bridge.

Belongs to the fimbrial export usher family.

The protein resides in the cell outer membrane. Part of the yehABCD fimbrial operon. Could contribute to adhesion to various surfaces in specific environmental niches. Probably involved in the export and assembly of fimbrial subunits across the outer membrane. This chain is Outer membrane usher protein YehB (yehB), found in Escherichia coli (strain K12).